A 486-amino-acid chain; its full sequence is Hematopoietic lineage cell-specific protein (486 aa).

The interval 27 to 66 (FVNDISEKEQRWGAKTIEGSGRTEHINIHQLRNKVSEEHD) is involved in HAX-1 binding. Lysine 41 carries the N6-acetyllysine modification. 3 Cortactin repeats span residues 79–115 (ASHG…SQTD), 116–152 (AARG…SQKD), and 153–189 (YSHG…SQRD). Lysine 123 carries the N6-acetyllysine modification. Phosphotyrosine is present on tyrosine 140. The Cortactin 4; truncated repeat unit spans residues 190–212 (YAKGFGGQYGIQKDRVDKSAVGF). An N6-acetyllysine modification is found at lysine 192. A Phosphotyrosine modification is found at tyrosine 198. At tyrosine 222 the chain carries Phosphotyrosine; by FGR. Positions 226 to 430 (TPIEAASSGA…AGPSAGAGGA (205 aa)) are disordered. Composition is skewed to basic and acidic residues over residues 240–258 (AKFE…EEKA) and 265–276 (QQERKAVVKMSR). Position 241 is an N6-acetyllysine (lysine 241). The residue at position 275 (serine 275) is a Phosphoserine. Threonine 330 bears the Phosphothreonine mark. Serine 333 is modified (phosphoserine). Over residues 358–367 (VVEEPVYEAA) the composition is skewed to low complexity. The span at 368-413 (PELEPEPEPDYEPEPETEPDYEDVGELDRQDEDAEGDYEDVLEPED) shows a compositional bias: acidic residues. A phosphotyrosine; by SYK and FES mark is found at tyrosine 388 and tyrosine 405. Residues 429–486 (GAGISAIALYDYQGEGSDELSFDPDDIITDIEMVDEGWWRGQCRGHFGLFPANYVKLL) enclose the SH3 domain.

Interacts (via SH2 domain) with FGR. Associates with the SH2 and SH3 domains of LCK. Binding to he LCK SH3 domain occurs constitutively, while binding to the LCK SH2 domain occurs only upon TCR stimulation. A similar binding pattern was observed with LYN, but not with FYN in which the FYN SH2 region associates upon TCR stimulation but the FYN SH3 region does not associate regardless of TCR stimulation. Directly associates with HAX1, through binding to its C-terminal region. Interacts with HS1BP3. Interacts with FES/FPS. Forms a multiprotein complex with LYN and ANKRD54. Post-translationally, phosphorylated by LYN, FYN and FGR after cross-linking of surface IgM on B-cells. Phosphorylation by LYN, FYN and FGR requires prior phosphorylation by SYK. Binds to LCK in vivo, and is tyrosine phosphorylated upon TCR stimulation. Phosphorylated by FES. As to expression, expressed only in tissues and cells of hematopoietic origin.

The protein localises to the mitochondrion. In terms of biological role, substrate of the antigen receptor-coupled tyrosine kinase. Plays a role in antigen receptor signaling for both clonal expansion and deletion in lymphoid cells. May also be involved in the regulation of gene expression. The polypeptide is Hematopoietic lineage cell-specific protein (Hcls1) (Mus musculus (Mouse)).